The chain runs to 437 residues: Endoplasmic reticulum protein SC65 (437 aa).

The first 18 residues, 1-18 (MARVAWGLLWLLLGSAGA), serve as a signal peptide directing secretion. Residue Asn361 is glycosylated (N-linked (GlcNAc...) asparagine). 2 stretches are compositionally biased toward acidic residues: residues 381–413 (DEME…EEGM) and 428–437 (AEAEPEPELA). The interval 381-437 (DEMELEETEPPLEPEDALSDAEFEGEGDYEEGMYADWWQEPDAKGDEAEAEPEPELA) is disordered.

The protein belongs to the leprecan family. As to quaternary structure, interacts with PLOD1, P3H3 and PPIB. Identified in a complex with PLOD1 and P3H3. Detected in fibroblasts (at protein level). Detected in spleen, prostate, testis, ovary, colon, pancreas, kidney, placenta and heart.

Its subcellular location is the endoplasmic reticulum. Its function is as follows. Part of a complex composed of PLOD1, P3H3 and P3H4 that catalyzes hydroxylation of lysine residues in collagen alpha chains and is required for normal assembly and cross-linking of collagen fibrils. Required for normal bone density and normal skin stability via its role in hydroxylation of lysine residues in collagen alpha chains and in collagen fibril assembly. The polypeptide is Endoplasmic reticulum protein SC65 (Homo sapiens (Human)).